Here is a 464-residue protein sequence, read N- to C-terminus: Argininosuccinate lyase (464 aa).

This sequence belongs to the lyase 1 family. Argininosuccinate lyase subfamily.

The protein resides in the cytoplasm. The enzyme catalyses 2-(N(omega)-L-arginino)succinate = fumarate + L-arginine. It functions in the pathway amino-acid biosynthesis; L-arginine biosynthesis; L-arginine from L-ornithine and carbamoyl phosphate: step 3/3. The protein is Argininosuccinate lyase of Moorella thermoacetica (strain ATCC 39073 / JCM 9320).